Reading from the N-terminus, the 95-residue chain is Co-chaperonin GroES (95 aa).

This sequence belongs to the GroES chaperonin family. Heptamer of 7 subunits arranged in a ring. Interacts with the chaperonin GroEL.

The protein localises to the cytoplasm. Functionally, together with the chaperonin GroEL, plays an essential role in assisting protein folding. The GroEL-GroES system forms a nano-cage that allows encapsulation of the non-native substrate proteins and provides a physical environment optimized to promote and accelerate protein folding. GroES binds to the apical surface of the GroEL ring, thereby capping the opening of the GroEL channel. The sequence is that of Co-chaperonin GroES from Neisseria meningitidis serogroup C (strain 053442).